The following is a 185-amino-acid chain: HTH-type transcriptional regulator PuuR (185 aa).

The disordered stretch occupies residues 1-20 (MSDEGLAPGKRLSEIRQQQG). Residues 12-66 (LSEIRQQQGLSQRRAAELSGLTHSAISTIEQDKVSPAISTLQKLLKVYGLSLSEF) form the HTH cro/C1-type domain. A DNA-binding region (H-T-H motif) is located at residues 23–42 (QRRAAELSGLTHSAISTIEQ). The Cupin type-2 domain occupies 111–178 (FETYQPGTTT…TSAGICRIIS (68 aa)).

It functions in the pathway amine and polyamine degradation; putrescine degradation [regulation]. Represses puuA, puuD and puuP. In Escherichia coli (strain K12), this protein is HTH-type transcriptional regulator PuuR (puuR).